A 924-amino-acid chain; its full sequence is Protein SMAX1-LIKE 2 (924 aa).

One can recognise a Clp R domain in the interval isoleucine 8–asparagine 181. Residues leucine 12 to leucine 83 form a repeat 1 region. Over residues threonine 86 to glutamine 105 the composition is skewed to low complexity. A disordered region spans residues threonine 86–proline 107. The segment at leucine 109–asparagine 181 is repeat 2. Residues threonine 522–lysine 552 are disordered. Positions phenylalanine 780–glutamate 784 match the EAR motif.

It belongs to the ClpA/ClpB family. In terms of assembly, interacts probably with TPL/TPR in an EAR-motif dependent manner. Expressed in seedlings and leaves. Detected in roots and axillary branches.

Probable component of a transcriptional corepressor complex that acts specifically in the karrikin pathway. Controls seedling growth redundantly with SMAX1, but is not involved in leaf morphology, shoot branching or germination control. The chain is Protein SMAX1-LIKE 2 from Arabidopsis thaliana (Mouse-ear cress).